A 247-amino-acid chain; its full sequence is Protein LIFEGUARD 4 (247 aa).

The next 7 membrane-spanning stretches (helical) occupy residues 42-62, 75-95, 105-125, 130-150, 165-185, 188-208, and 222-242; these read VYSI…TVVF, AGLA…CPLY, YLLL…TCAF, VILE…VYTF, FLFG…FFPL, ISVM…IVYD, and IWAA…LLTI.

It belongs to the BI1 family.

It localises to the membrane. In Arabidopsis thaliana (Mouse-ear cress), this protein is Protein LIFEGUARD 4.